We begin with the raw amino-acid sequence, 311 residues long: Malate dehydrogenase (311 aa).

NAD(+) is bound by residues 7 to 13 (GAAGGIG) and Asp34. Residues Arg81 and Arg87 each coordinate substrate. NAD(+)-binding positions include Asn94 and 117 to 119 (ITN). Positions 119 and 153 each coordinate substrate. The Proton acceptor role is filled by His177. Met227 is a binding site for NAD(+).

Belongs to the LDH/MDH superfamily. MDH type 1 family. Homodimer.

The catalysed reaction is (S)-malate + NAD(+) = oxaloacetate + NADH + H(+). In terms of biological role, catalyzes the reversible oxidation of malate to oxaloacetate. The polypeptide is Malate dehydrogenase (Shewanella denitrificans (strain OS217 / ATCC BAA-1090 / DSM 15013)).